A 154-amino-acid chain; its full sequence is Myoglobin (154 aa).

Residues 2 to 148 (GLSEAEWQLV…FRKDIAAKYK (147 aa)) enclose the Globin domain. Residue Ser-4 is modified to Phosphoserine. Position 65 (His-65) interacts with nitrite. His-65 is an O2 binding site. Thr-68 is subject to Phosphothreonine. His-94 serves as a coordination point for heme b.

Belongs to the globin family. Monomeric.

Its subcellular location is the cytoplasm. It localises to the sarcoplasm. The catalysed reaction is Fe(III)-heme b-[protein] + nitric oxide + H2O = Fe(II)-heme b-[protein] + nitrite + 2 H(+). It carries out the reaction H2O2 + AH2 = A + 2 H2O. Its function is as follows. Monomeric heme protein which primary function is to store oxygen and facilitate its diffusion within muscle tissues. Reversibly binds oxygen through a pentacoordinated heme iron and enables its timely and efficient release as needed during periods of heightened demand. Depending on the oxidative conditions of tissues and cells, and in addition to its ability to bind oxygen, it also has a nitrite reductase activity whereby it regulates the production of bioactive nitric oxide. Under stress conditions, like hypoxia and anoxia, it also protects cells against reactive oxygen species thanks to its pseudoperoxidase activity. In Ziphius cavirostris (Cuvier's beaked whale), this protein is Myoglobin (MB).